We begin with the raw amino-acid sequence, 288 residues long: Elongation factor Ts (288 aa).

Residues 82–85 (TDFV) are involved in Mg(2+) ion dislocation from EF-Tu.

The protein belongs to the EF-Ts family.

Its subcellular location is the cytoplasm. Functionally, associates with the EF-Tu.GDP complex and induces the exchange of GDP to GTP. It remains bound to the aminoacyl-tRNA.EF-Tu.GTP complex up to the GTP hydrolysis stage on the ribosome. This chain is Elongation factor Ts, found in Chlorobium chlorochromatii (strain CaD3).